Consider the following 494-residue polypeptide: MKKQAFSSEQYLNLQRDHILERINQFDGKLYLEFGGKMLEDFHAARVLPGYEPDNKIKLLQELKEQVEVVIAINASNIEHSKARGDLGISYDQEVLRLIDKFNELGIFVGSVVITQYAGQPAADAFRNQLEKNGIDSYLHYPIKGYPTDMDHIISPEGMGKNDYIKTSRNLIVVTAPGPGSGKLATCMSNMYHDQINGIKSGYAKFETFPIWNLPLHHPVNLAYEAATADLDDVNMIDPFHLQTYGETTVNYNRDIEIFPVLKRMLERILGKSPYASPTDMGVNMVGFAITDDEAAVEASKQEIIRRYYQTVLDFKAEKVGEAAVKKIELLMNDLGITPADRKVAVVARQKAEETGGPALAFELPNGEIVTGKNSELFGPTAAALINAIKKSADIAKEVKLIEPEVVKPIQGLKIDHLGSRNPRLHSNEILIALAITATENPDAARAMEELGNLKGSEAHSTIILTDEDKNVLRKLGINVTFDPYYQYDRLYRK.

It belongs to the UPF0371 family.

This chain is UPF0371 protein spr0309, found in Streptococcus pneumoniae (strain ATCC BAA-255 / R6).